Consider the following 41-residue polypeptide: Cytochrome b559 subunit beta (41 aa).

A helical membrane pass occupies residues 16–32; sequence WLAIHALAVPTVFFLGS. Heme is bound at residue histidine 20.

It belongs to the PsbE/PsbF family. As to quaternary structure, heterodimer of an alpha subunit and a beta subunit. PSII is composed of 1 copy each of membrane proteins PsbA, PsbB, PsbC, PsbD, PsbE, PsbF, PsbH, PsbI, PsbJ, PsbK, PsbL, PsbM, PsbT, PsbX, PsbY, PsbZ, Psb30/Ycf12, at least 3 peripheral proteins of the oxygen-evolving complex and a large number of cofactors. It forms dimeric complexes. It depends on heme b as a cofactor.

Its subcellular location is the plastid. The protein localises to the chloroplast thylakoid membrane. In terms of biological role, this b-type cytochrome is tightly associated with the reaction center of photosystem II (PSII). PSII is a light-driven water:plastoquinone oxidoreductase that uses light energy to abstract electrons from H(2)O, generating O(2) and a proton gradient subsequently used for ATP formation. It consists of a core antenna complex that captures photons, and an electron transfer chain that converts photonic excitation into a charge separation. The polypeptide is Cytochrome b559 subunit beta (Oltmannsiellopsis viridis (Marine flagellate)).